The primary structure comprises 60 residues: uncharacterized protein (60 aa).

It to E.coli YjeQ and H.influenzae HI_1714.

This is an uncharacterized protein from Azotobacter vinelandii.